Here is a 473-residue protein sequence, read N- to C-terminus: MGAVVVDDGPSGVKAPDGGWGWAVLFGCFIITGFSYAFPKAVSVFFKELIREFGVGYSDTAWISSILLAMLYGTGPLCSVCVNRFGCRPVMLVGGLFASMGMVIASFCTSIVQIYLTAGVITGLGLALNFQPSLIMLNRYFDKRRPLANGLSAAGSPVFLCALSPLGQILQHEYGWRGGFLILGGMLLNCCVCGALMRPLEPPKKSEATKEPAEKKAKKKLLDFSVFKDGGFVIYTLAASIMVLGLFVPPVFVVSYAKDLGYQDTKAAFLLTILGFIDIFARPICGMVAGLKWVRPRCVYLFSFAMIFNGFTDLMGSMSVDYGGLVVFCIFFGISYGMVGALQFEVLMAIVGTQKFSSAIGLVLLAEAMAVLIGPPSAGKLLDLTRRYMFVFIIAGIEVTTSALVLALGNFFCIKKKPAEPHTKEAAAEREELNKSEDKTPEDAKVDSIEVEQFLKDEPEKNGEVVTNPETCV.

Residues 1–17 (MGAVVVDDGPSGVKAPD) lie on the Cytoplasmic side of the membrane. The helical transmembrane segment at 18 to 38 (GGWGWAVLFGCFIITGFSYAF) threads the bilayer. Over 39–61 (PKAVSVFFKELIREFGVGYSDTA) the chain is Extracellular. The helical transmembrane segment at 62 to 82 (WISSILLAMLYGTGPLCSVCV) threads the bilayer. Residues 83–91 (NRFGCRPVM) are Cytoplasmic-facing. The chain crosses the membrane as a helical span at residues 92–112 (LVGGLFASMGMVIASFCTSIV). The Extracellular portion of the chain corresponds to 113 to 115 (QIY). Residues 116-136 (LTAGVITGLGLALNFQPSLIM) traverse the membrane as a helical segment. Residues 137-149 (LNRYFDKRRPLAN) lie on the Cytoplasmic side of the membrane. A helical transmembrane segment spans residues 150 to 170 (GLSAAGSPVFLCALSPLGQIL). Over 171-179 (QHEYGWRGG) the chain is Extracellular. The helical transmembrane segment at 180–200 (FLILGGMLLNCCVCGALMRPL) threads the bilayer. The Cytoplasmic portion of the chain corresponds to 201–231 (EPPKKSEATKEPAEKKAKKKLLDFSVFKDGG). Residues 232–252 (FVIYTLAASIMVLGLFVPPVF) form a helical membrane-spanning segment. The Extracellular portion of the chain corresponds to 253–268 (VVSYAKDLGYQDTKAA). Residues 269–289 (FLLTILGFIDIFARPICGMVA) traverse the membrane as a helical segment. Over 290-297 (GLKWVRPR) the chain is Cytoplasmic. Residues 298 to 318 (CVYLFSFAMIFNGFTDLMGSM) form a helical membrane-spanning segment. Topologically, residues 319-321 (SVD) are extracellular. A helical transmembrane segment spans residues 322-342 (YGGLVVFCIFFGISYGMVGAL). Residues 343–358 (QFEVLMAIVGTQKFSS) are Cytoplasmic-facing. The helical transmembrane segment at 359–379 (AIGLVLLAEAMAVLIGPPSAG) threads the bilayer. Over 380–388 (KLLDLTRRY) the chain is Extracellular. A helical membrane pass occupies residues 389 to 409 (MFVFIIAGIEVTTSALVLALG). At 410–473 (NFFCIKKKPA…EVVTNPETCV (64 aa)) the chain is on the cytoplasmic side. Residues 421–447 (PHTKEAAAEREELNKSEDKTPEDAKVD) are disordered. Basolateral sorting signal regions lie at residues 427–449 (AAER…VDSI) and 449–473 (IEVE…ETCV).

This sequence belongs to the major facilitator superfamily. Monocarboxylate porter (TC 2.A.1.13) family. As to quaternary structure, interacts with BSG; interaction mediates SLC16A3 targeting to the plasma membrane.

Its subcellular location is the cell membrane. The protein resides in the basolateral cell membrane. It catalyses the reaction (S)-lactate(in) + H(+)(in) = (S)-lactate(out) + H(+)(out). The catalysed reaction is pyruvate(out) + H(+)(out) = pyruvate(in) + H(+)(in). Its function is as follows. Proton-dependent transporter of monocarboxylates such as L-lactate and pyruvate. Plays a predominant role in the L-lactate efflux from highly glycolytic cells. This Gallus gallus (Chicken) protein is Monocarboxylate transporter 4 (SLC16A3).